The following is a 365-amino-acid chain: MLIYLFEWLSHYFKGLEVFSNYISVRIIMISITSLLITLALGRPMISWLQKMQIGQIVRDDGPQSHFSKRNTPTMGGVLILSSVIISCLLWGDLTSIYLWILILVVIFFGAIGFFDDYLKLVLKHPKGLRAKYKFALQSIFSIVLAIVLFYLLSKNGQMSLSIPFSKSLYIPMGIVIFVVLAFFIINGSSNAVNLTDGLDGLAIVPVVLVAAGLGIYAYIETNSTLANYLLFNYLGNPGLAEVAVFCAAVCGSGLAFLWFNSHPAEVFMGDVGSLTLGAVLGVIAVMVRQELIFFIMGLLFVVEALSVMLQVGSYKLRNGKRIFRMAPIHHHFELKGWPETKVVIRFWIISLILFLIGLAAIKVR.

10 consecutive transmembrane segments (helical) span residues 22-42 (YISV…LALG), 74-94 (TMGG…WGDL), 95-115 (TSIY…IGFF), 133-153 (YKFA…FYLL), 168-188 (SLYI…IING), 201-221 (GLAI…AYIE), 240-260 (LAEV…FLWF), 267-287 (VFMG…IAVM), 292-312 (LIFF…MLQV), and 342-362 (KVVI…LAAI).

The protein belongs to the glycosyltransferase 4 family. MraY subfamily. Requires Mg(2+) as cofactor.

Its subcellular location is the cell inner membrane. The catalysed reaction is UDP-N-acetyl-alpha-D-muramoyl-L-alanyl-gamma-D-glutamyl-meso-2,6-diaminopimeloyl-D-alanyl-D-alanine + di-trans,octa-cis-undecaprenyl phosphate = di-trans,octa-cis-undecaprenyl diphospho-N-acetyl-alpha-D-muramoyl-L-alanyl-D-glutamyl-meso-2,6-diaminopimeloyl-D-alanyl-D-alanine + UMP. It participates in cell wall biogenesis; peptidoglycan biosynthesis. Catalyzes the initial step of the lipid cycle reactions in the biosynthesis of the cell wall peptidoglycan: transfers peptidoglycan precursor phospho-MurNAc-pentapeptide from UDP-MurNAc-pentapeptide onto the lipid carrier undecaprenyl phosphate, yielding undecaprenyl-pyrophosphoryl-MurNAc-pentapeptide, known as lipid I. This Francisella tularensis subsp. tularensis (strain WY96-3418) protein is Phospho-N-acetylmuramoyl-pentapeptide-transferase.